The chain runs to 579 residues: Maintenance of mitochondrial morphology protein 1 (579 aa).

Residues 1–43 lie on the Lumenal side of the membrane; it reads MQQPQQQDLQIGLPYAPVQPPIPSPAAYFAYLPSPSRWTFTQG. The helical transmembrane segment at 44-64 threads the bilayer; it reads LIVGQVSMVIVALLLIRYVIF. Residues 65–579 are Cytoplasmic-facing; that stretch reads EDSATALEKE…GLRNRPGFVQ (515 aa). Residues 150-391 form the SMP-LTD domain; sequence LPESADWLNV…WPRYWSLTLP (242 aa). Disordered stretches follow at residues 309–332, 460–479, and 558–579; these read VLPT…RSRH, RPSL…SGLR, and SSVL…GFVQ. 2 stretches are compositionally biased toward low complexity: residues 311 to 328 and 465 to 476; these read PTAN…ATPP and SSRPPHVRSSSS.

It belongs to the MMM1 family. As to quaternary structure, homodimer. Component of the ER-mitochondria encounter structure (ERMES) or MDM complex, composed of MMM1, MDM10, MDM12 and MDM34. An MMM1 homodimer associates with one molecule of MDM12 on each side in a pairwise head-to-tail manner, and the SMP-LTD domains of MMM1 and MDM12 generate a continuous hydrophobic tunnel for phospholipid trafficking.

It is found in the endoplasmic reticulum membrane. Component of the ERMES/MDM complex, which serves as a molecular tether to connect the endoplasmic reticulum (ER) and mitochondria. Components of this complex are involved in the control of mitochondrial shape and protein biogenesis, and function in nonvesicular lipid trafficking between the ER and mitochondria. The MDM12-MMM1 subcomplex functions in the major beta-barrel assembly pathway that is responsible for biogenesis of all outer membrane beta-barrel proteins, and acts in a late step after the SAM complex. The MDM10-MDM12-MMM1 subcomplex further acts in the TOM40-specific pathway after the action of the MDM12-MMM1 complex. Essential for establishing and maintaining the structure of mitochondria and maintenance of mtDNA nucleoids. The polypeptide is Maintenance of mitochondrial morphology protein 1 (Mycosarcoma maydis (Corn smut fungus)).